We begin with the raw amino-acid sequence, 467 residues long: Adenosylhomocysteinase (467 aa).

Residues Thr-68, Asp-144, and Glu-169 each coordinate substrate. An NAD(+)-binding site is contributed by 170-172 (TTT). Lys-199 and Asp-203 together coordinate substrate. NAD(+) contacts are provided by residues Asn-204, 233 to 238 (GYGDVG), Glu-256, Asn-305, 326 to 328 (IGH), and Asn-373.

This sequence belongs to the adenosylhomocysteinase family. Requires NAD(+) as cofactor.

It localises to the cytoplasm. The catalysed reaction is S-adenosyl-L-homocysteine + H2O = L-homocysteine + adenosine. It functions in the pathway amino-acid biosynthesis; L-homocysteine biosynthesis; L-homocysteine from S-adenosyl-L-homocysteine: step 1/1. May play a key role in the regulation of the intracellular concentration of adenosylhomocysteine. This is Adenosylhomocysteinase from Acinetobacter baylyi (strain ATCC 33305 / BD413 / ADP1).